The chain runs to 426 residues: S-adenosylmethionine synthase (426 aa).

Position 22 (histidine 22) interacts with ATP. Aspartate 24 lines the Mg(2+) pocket. Position 50 (glutamate 50) interacts with K(+). Residues glutamate 63 and glutamine 106 each coordinate L-methionine. A flexible loop region spans residues 106 to 116 (QSPDISQGVTA). ATP contacts are provided by residues 181-183 (DGK), 257-258 (KF), aspartate 266, 272-273 (RK), alanine 289, and lysine 293. L-methionine is bound at residue aspartate 266. Lysine 297 contributes to the L-methionine binding site.

This sequence belongs to the AdoMet synthase family. As to quaternary structure, homotetramer; dimer of dimers. The cofactor is Mg(2+). It depends on K(+) as a cofactor.

It localises to the cytoplasm. It carries out the reaction L-methionine + ATP + H2O = S-adenosyl-L-methionine + phosphate + diphosphate. It participates in amino-acid biosynthesis; S-adenosyl-L-methionine biosynthesis; S-adenosyl-L-methionine from L-methionine: step 1/1. In terms of biological role, catalyzes the formation of S-adenosylmethionine (AdoMet) from methionine and ATP. The overall synthetic reaction is composed of two sequential steps, AdoMet formation and the subsequent tripolyphosphate hydrolysis which occurs prior to release of AdoMet from the enzyme. The chain is S-adenosylmethionine synthase from Synechocystis sp. (strain ATCC 27184 / PCC 6803 / Kazusa).